The chain runs to 236 residues: MNSLSFLNHEFEAFPSPELALTDPNGLLAIGGDLRPERLLTAYYHGIFPWFNADDPILWWSPDPRAIFIPGQVNISTSLRKYLKKQPWRFTINHAFTDVMAGCAQPRRKQAGTWITHEIQMAYRELHHNGHAHSVEVWHGERLIGGLYGLAIGQVFCGESMFHRETNASKAAMLLLQQHLINMDFKLIDAQVMNPHLESLGAKPVKRANFIQLLTQFRDNTANPAAWIPSEVTLEL.

It belongs to the L/F-transferase family.

It localises to the cytoplasm. The enzyme catalyses N-terminal L-lysyl-[protein] + L-leucyl-tRNA(Leu) = N-terminal L-leucyl-L-lysyl-[protein] + tRNA(Leu) + H(+). The catalysed reaction is N-terminal L-arginyl-[protein] + L-leucyl-tRNA(Leu) = N-terminal L-leucyl-L-arginyl-[protein] + tRNA(Leu) + H(+). It carries out the reaction L-phenylalanyl-tRNA(Phe) + an N-terminal L-alpha-aminoacyl-[protein] = an N-terminal L-phenylalanyl-L-alpha-aminoacyl-[protein] + tRNA(Phe). Functions in the N-end rule pathway of protein degradation where it conjugates Leu, Phe and, less efficiently, Met from aminoacyl-tRNAs to the N-termini of proteins containing an N-terminal arginine or lysine. The chain is Leucyl/phenylalanyl-tRNA--protein transferase from Shewanella sp. (strain MR-4).